We begin with the raw amino-acid sequence, 185 residues long: Ubiquitin-fold modifier-conjugating enzyme 1 (185 aa).

Cys-119 functions as the Glycyl thioester intermediate in the catalytic mechanism.

Belongs to the ubiquitin-conjugating enzyme family. UFC1 subfamily.

E2-like enzyme which forms an intermediate with UFM1 via a thioester linkage. This chain is Ubiquitin-fold modifier-conjugating enzyme 1, found in Oryza sativa subsp. japonica (Rice).